We begin with the raw amino-acid sequence, 757 residues long: 5-methyltetrahydropteroyltriglutamate--homocysteine methyltransferase (757 aa).

Residues 17 to 20 (RELK) and K117 each bind 5-methyltetrahydropteroyltri-L-glutamate. L-homocysteine-binding positions include 434 to 436 (IGS) and E487. L-methionine is bound by residues 434 to 436 (IGS) and E487. 5-methyltetrahydropteroyltri-L-glutamate-binding positions include 518–519 (RC) and W564. L-homocysteine is bound at residue D602. D602 serves as a coordination point for L-methionine. Residue E608 coordinates 5-methyltetrahydropteroyltri-L-glutamate. Zn(2+)-binding residues include H644, C646, and E668. Catalysis depends on H697, which acts as the Proton donor. C729 lines the Zn(2+) pocket.

The protein belongs to the vitamin-B12 independent methionine synthase family. Zn(2+) is required as a cofactor.

It carries out the reaction 5-methyltetrahydropteroyltri-L-glutamate + L-homocysteine = tetrahydropteroyltri-L-glutamate + L-methionine. The protein operates within amino-acid biosynthesis; L-methionine biosynthesis via de novo pathway; L-methionine from L-homocysteine (MetE route): step 1/1. Its function is as follows. Catalyzes the transfer of a methyl group from 5-methyltetrahydrofolate to homocysteine resulting in methionine formation. The polypeptide is 5-methyltetrahydropteroyltriglutamate--homocysteine methyltransferase (Proteus mirabilis (strain HI4320)).